A 961-amino-acid chain; its full sequence is RNA polymerase II subunit A C-terminal domain phosphatase (961 aa).

At methionine 1 the chain carries N-acetylmethionine. Residues 178 to 344 (HRNRKLVLMV…SRESQTRKKV (167 aa)) form the FCP1 homology domain. The tract at residues 328 to 589 (DMNAPPGSRE…EEEDTDEDDH (262 aa)) is disordered. Over residues 394–406 (DSPRPGKPDERDI) the composition is skewed to basic and acidic residues. Serine 395 is subject to Phosphoserine. A compositionally biased stretch (acidic residues) spans 450–462 (LDFDLSSDSESSS). Over residues 463–475 (ESEGTKSSSSASD) the composition is skewed to low complexity. Over residues 575-588 (SMEEEEEEDTDEDD) the composition is skewed to acidic residues. In terms of domain architecture, BRCT spans 629–728 (LKSKVLADVA…DKVEEQLFPL (100 aa)). Phosphoserine is present on residues serine 674 and serine 740. 2 disordered regions span residues 730 to 752 (DDHT…GVPP) and 780 to 949 (KLIR…ADEM). Lysine 780 is modified (N6-acetyllysine). Residues 793–803 (SSSLPIRQEPS) are compositionally biased toward polar residues. Serine 839 carries the post-translational modification Phosphoserine. The span at 850–859 (CKEDLESMDK) shows a compositional bias: basic and acidic residues. Acidic residues-rich tracts occupy residues 860–873 (EVDD…DDSD) and 937–947 (NEDEGSSSEAD). Serine 869 and serine 872 each carry phosphoserine.

As to quaternary structure, homodimer. Interacts with GTF2F1. Interacts with WDR77, SNRPB and SNRNP70. Post-translationally, phosphorylated. In the presence of TFIIF, the phosphorylated form has an increased CTD phosphatase activity. The phosphorylation is required for the physical interaction with GTF2F1. In terms of tissue distribution, ubiquitously expressed.

The protein resides in the nucleus. The protein localises to the cytoplasm. It is found in the cytoskeleton. It localises to the microtubule organizing center. Its subcellular location is the centrosome. The protein resides in the spindle pole. The protein localises to the midbody. The catalysed reaction is O-phospho-L-seryl-[protein] + H2O = L-seryl-[protein] + phosphate. It carries out the reaction O-phospho-L-threonyl-[protein] + H2O = L-threonyl-[protein] + phosphate. Its function is as follows. Processively dephosphorylates 'Ser-2' and 'Ser-5' of the heptad repeats YSPTSPS in the C-terminal domain of the largest RNA polymerase II subunit. This promotes the activity of RNA polymerase II. Plays a role in the exit from mitosis by dephosphorylating crucial mitotic substrates (USP44, CDC20 and WEE1) that are required for M-phase-promoting factor (MPF)/CDK1 inactivation. The chain is RNA polymerase II subunit A C-terminal domain phosphatase (CTDP1) from Homo sapiens (Human).